A 508-amino-acid chain; its full sequence is UDP-N-acetylmuramoylalanine--D-glutamate ligase (508 aa).

Residue 138 to 144 (GTNGKTT) coordinates ATP.

This sequence belongs to the MurCDEF family.

Its subcellular location is the cytoplasm. The enzyme catalyses UDP-N-acetyl-alpha-D-muramoyl-L-alanine + D-glutamate + ATP = UDP-N-acetyl-alpha-D-muramoyl-L-alanyl-D-glutamate + ADP + phosphate + H(+). The protein operates within cell wall biogenesis; peptidoglycan biosynthesis. Its function is as follows. Cell wall formation. Catalyzes the addition of glutamate to the nucleotide precursor UDP-N-acetylmuramoyl-L-alanine (UMA). This chain is UDP-N-acetylmuramoylalanine--D-glutamate ligase, found in Bordetella avium (strain 197N).